The primary structure comprises 271 residues: Formamidopyrimidine-DNA glycosylase (271 aa).

The active-site Schiff-base intermediate with DNA is proline 2. Glutamate 3 functions as the Proton donor in the catalytic mechanism. Lysine 58 serves as the catalytic Proton donor; for beta-elimination activity. DNA is bound by residues arginine 110 and arginine 152. The FPG-type zinc-finger motif lies at 237–271 (AVYGQTGKPCTVCGTPIARIRLGNRSTWFCPVCQK). The Proton donor; for delta-elimination activity role is filled by arginine 261.

It belongs to the FPG family. As to quaternary structure, monomer. Zn(2+) serves as cofactor.

It carries out the reaction Hydrolysis of DNA containing ring-opened 7-methylguanine residues, releasing 2,6-diamino-4-hydroxy-5-(N-methyl)formamidopyrimidine.. The enzyme catalyses 2'-deoxyribonucleotide-(2'-deoxyribose 5'-phosphate)-2'-deoxyribonucleotide-DNA = a 3'-end 2'-deoxyribonucleotide-(2,3-dehydro-2,3-deoxyribose 5'-phosphate)-DNA + a 5'-end 5'-phospho-2'-deoxyribonucleoside-DNA + H(+). Its function is as follows. Involved in base excision repair of DNA damaged by oxidation or by mutagenic agents. Acts as a DNA glycosylase that recognizes and removes damaged bases. Has a preference for oxidized purines, such as 7,8-dihydro-8-oxoguanine (8-oxoG). Has AP (apurinic/apyrimidinic) lyase activity and introduces nicks in the DNA strand. Cleaves the DNA backbone by beta-delta elimination to generate a single-strand break at the site of the removed base with both 3'- and 5'-phosphates. The sequence is that of Formamidopyrimidine-DNA glycosylase from Geobacter sulfurreducens (strain ATCC 51573 / DSM 12127 / PCA).